Consider the following 134-residue polypeptide: Large ribosomal subunit protein bL20 (134 aa).

Belongs to the bacterial ribosomal protein bL20 family.

Functionally, binds directly to 23S ribosomal RNA and is necessary for the in vitro assembly process of the 50S ribosomal subunit. It is not involved in the protein synthesizing functions of that subunit. The protein is Large ribosomal subunit protein bL20 of Allorhizobium ampelinum (strain ATCC BAA-846 / DSM 112012 / S4) (Agrobacterium vitis (strain S4)).